Here is a 167-residue protein sequence, read N- to C-terminus: MLKKIIPAIVLIAGTSGVVNAGNWQYKSLDVNVNIEQNFIPDIDSAVRIIPVNYDSDPKLNSQLYTVEMTIPAGVSAVKIVPTDSLTSSGQQIGKLVNVNNPDQNMNYYIRKDSGAGKFMAGQKGSFSVKENTSYTFSAIYTGGEYPNSGYSSGTYAGHLTVSFYSN.

The first 21 residues, 1–21, serve as a signal peptide directing secretion; the sequence is MLKKIIPAIVLIAGTSGVVNA.

It is found in the fimbrium. This chain is CS6 fimbrial subunit B (cssB), found in Escherichia coli.